The chain runs to 391 residues: MAKGKFERTKPHVNIGTIGHVDHGKTSLTAAITKYFGEFKAYDQIDAAPEEKARGITISTAHVEYETENRHYAHVDCPGHADYVKNMITGAAQMDGAILVVSAADGPMPQTREHILLARQVGVPAIVVFLNKVDQVDDPELLELVELEIRELLSKYEFPGDDIPIVKGSALAALEDSNKEIGEDAVRQLMAEVDKYIPTPERPIDQPFLMPIEDVFSISGRGTVVTGRVERGVVKVGEEVEIVGIRPTSKTTVTGVEMFRKLLDQGQAGDNIGALLRGIDREGVERGQVLAKPGSVTPHTKFKAEAYILTKEEGGRHTPFFTNYRPQFYFRTTDVTGVVTLPEGTEMVMPGDNVTMDVTLIVPIAMEERLRFAIREGGRTVGAGIVASITE.

Residues 10–201 (KPHVNIGTIG…EVDKYIPTPE (192 aa)) form the tr-type G domain. Positions 19–26 (GHVDHGKT) are G1. 19 to 26 (GHVDHGKT) is a binding site for GTP. Residue Thr26 participates in Mg(2+) binding. The G2 stretch occupies residues 55–59 (GITIS). The interval 76–79 (DCPG) is G3. GTP is bound by residues 76–80 (DCPGH) and 131–134 (NKVD). Residues 131 to 134 (NKVD) form a G4 region. A G5 region spans residues 169–171 (SAL).

The protein belongs to the TRAFAC class translation factor GTPase superfamily. Classic translation factor GTPase family. EF-Tu/EF-1A subfamily. As to quaternary structure, monomer.

It localises to the cytoplasm. The enzyme catalyses GTP + H2O = GDP + phosphate + H(+). Its function is as follows. GTP hydrolase that promotes the GTP-dependent binding of aminoacyl-tRNA to the A-site of ribosomes during protein biosynthesis. The chain is Elongation factor Tu from Chelativorans sp. (strain BNC1).